The chain runs to 186 residues: MAGLTDLQRLQARVEELERWVYGPGGARGSRKVADGLVKVQVALGNISSKRERVKILYKKIEDLIKYLDPEYIDRIAIPDASKLQFILAEEQFILSQVALLEQVNALVPMLDSAHIKAVPEHAARLQRLAQIHIQQQDQCVEITEESKALLEEYNKTTMLLSKQFVQWDELLCQLEAATQVKPAEE.

The residue at position 2 (A2) is an N-acetylalanine. Residues Q135–T157 adopt a coiled-coil conformation.

It belongs to the dynactin subunit 3 family. In terms of assembly, subunit of dynactin, a multiprotein complex part of a tripartite complex with dynein and a adapter, such as BICDL1, BICD2 or HOOK3. The dynactin complex is built around ACTR1A/ACTB filament and consists of an actin-related filament composed of a shoulder domain, a pointed end and a barbed end. Its length is defined by its flexible shoulder domain. The soulder is composed of 2 DCTN1 subunits, 4 DCTN2 and 2 DCTN3. The 4 DCNT2 (via N-terminus) bind the ACTR1A filament and act as molecular rulers to determine the length. The pointed end is important for binding dynein-dynactin cargo adapters. Consists of 4 subunits: ACTR10, DCNT4, DCTN5 and DCTN6. The barbed end is composed of a CAPZA1:CAPZB heterodimers, which binds ACTR1A/ACTB filament and dynactin and stabilizes dynactin. Ubiquitously expressed. Highly expressed in muscle and pancreas and detected at lower levels in brain.

The protein resides in the cytoplasm. Its subcellular location is the cytoskeleton. It localises to the microtubule organizing center. The protein localises to the centrosome. It is found in the chromosome. The protein resides in the centromere. Its subcellular location is the kinetochore. It localises to the spindle. The protein localises to the cleavage furrow. It is found in the midbody. In terms of biological role, part of the dynactin complex that activates the molecular motor dynein for ultra-processive transport along microtubules. Together with dynein may be involved in spindle assembly and cytokinesis. In Homo sapiens (Human), this protein is Dynactin subunit 3.